Consider the following 509-residue polypeptide: MSRTLLRFLEDGAMSDVTVVAGDSTFLGHKVILSLHSDYFYRLFNGDFTSPDTVTLDATDDAVRTVFTYMYAGCDGLNDRTIDDLQSIIVLADYLGITKLVDECVRRIVSKVDVLNCVGVYTFAETYHITDLQRAAKTFLTELLGSKEAFEELSQDDAVIALRETRNIVDRRSILRAILLWVRKCPDRIEQLKVLVAAVDDVDDDDNVYTIYERYAEELKDMIACPLSYNCVVVVDRDRYVRLINPDTLWSKRVTYIRKRAIGDRFTVVCMNNVLYCLGGTLDGAPTCDVLAYDLLTNEYSLMPEMGHYRRNASACIVNGYIYVVGGVDEENRLIGSVEYWQPGMEEWHDAPYLQANVETATVCYRNELWIVGGTVDLYHPTFISAVKKLTDNRWMSMEPLPEPRSGATTVVYNNRLYCIGGRIHGGAYTNHVYNYLDESRTWERVGDMANVRRNPSCCVYNKAIYVLGGNTNAVEKYNGWKWQEVGNISTYPACNNTAYPFFYTNDEI.

A BTB domain is found at 15 to 79 (SDVTVVAGDS…MYAGCDGLND (65 aa)). 5 Kelch repeats span residues 274 to 320 (VLYC…IVNG), 321 to 368 (YIYV…YRNE), 370 to 415 (WIVG…VYNN), 416 to 463 (RLYC…VYNK), and 465 to 509 (IYVL…NDEI).

It belongs to the poxviruses Kelch family.

The sequence is that of Kelch repeat protein M-T9 from Myxoma virus (strain Lausanne) (MYXV).